Here is a 334-residue protein sequence, read N- to C-terminus: Transmembrane protein 41 homolog (334 aa).

A glycan (N-linked (GlcNAc...) asparagine) is linked at Asn-43. Positions Lys-47 to Asn-79 are disordered. Asn-83 carries N-linked (GlcNAc...) asparagine glycosylation. The next 6 helical transmembrane spans lie at Leu-97–Phe-117, Phe-156–Gly-176, Val-192–Tyr-214, Ile-246–Leu-266, Val-269–Ala-289, and Ile-305–Thr-325.

This sequence belongs to the TMEM41 family.

It localises to the membrane. The chain is Transmembrane protein 41 homolog from Dictyostelium discoideum (Social amoeba).